The following is a 1026-amino-acid chain: Unconventional myosin-Ic (1026 aa).

Methionine 1 is subject to N-acetylmethionine. Residues glycine 12 to glutamate 695 form the Myosin motor domain. Residues asparagine 53, tyrosine 61, serine 104–glutamate 113, and asparagine 157–serine 161 contribute to the ATP site. Lysine 349 is modified (N6-methyllysine). An actin-binding region spans residues leucine 572–aspartate 594. IQ domains are found at residues lysine 698–valine 727 and isoleucine 721–threonine 750. Residues lysine 849–arginine 1024 enclose the TH1 domain.

It belongs to the TRAFAC class myosin-kinesin ATPase superfamily. Myosin family. In terms of assembly, interacts (via its IQ motifs) with calm.

It is found in the cytoplasm. Its subcellular location is the cell cortex. The protein localises to the cell projection. The protein resides in the ruffle membrane. It localises to the cytoplasmic vesicle. It is found in the stereocilium membrane. Functionally, myosins are actin-based motor molecules with ATPase activity. Unconventional myosins serve in intracellular movements. Their highly divergent tails are presumed to bind to membranous compartments, which would be moved relative to actin filaments. The sequence is that of Unconventional myosin-Ic (myo1c) from Danio rerio (Zebrafish).